Consider the following 240-residue polypeptide: Regulatory protein HlyX (240 aa).

The tract at residues Cys15 to Cys28 is essential for the oxygen-regulated activity. Residues Met163–Asp236 enclose the HTH crp-type domain. Residues Arg196 to Gly215 constitute a DNA-binding region (H-T-H motif).

Its subcellular location is the cytoplasm. Confers a hemolytic phenotype on E.coli. May regulate, rather than mediate, hemolytic activity. The polypeptide is Regulatory protein HlyX (hlyX) (Actinobacillus pleuropneumoniae (Haemophilus pleuropneumoniae)).